Consider the following 323-residue polypeptide: MIEFGNFYQLIAKNHLSHWLETLPAQIAAWQREQQHGLFKQWSNAVEFLPEMTPWRLDLLHSVTAESETPLSEGQLKRIDTLLRNLMPWRKGPFSLYGVDIDTEWRSDWKWDRVLPHLSDLTGRTILDVGCGSGYHLWRMIGAGAHLAVGIDPTQLFLCQFEVVRKLLGNDQRAHLLPLGIEQLPALKAFDTVFSMGVLYHRRSPLEHLWQLKDQLVNEGELVLETLVVDGDENTVLVPGDRYAQMRNVYFIPSAPALKKWLEKCGFIDVRIADVCVTTTEEQRRTEWMVTESLADFLDPNDRSKTVEGYPAPQRAVLIARKP.

Carboxy-S-adenosyl-L-methionine contacts are provided by residues K91, W105, K110, G130, 152 to 154, 181 to 182, M196, Y200, and R315; these read DPT and IE.

The protein belongs to the class I-like SAM-binding methyltransferase superfamily. CmoB family. In terms of assembly, homotetramer.

The catalysed reaction is carboxy-S-adenosyl-L-methionine + 5-hydroxyuridine(34) in tRNA = 5-carboxymethoxyuridine(34) in tRNA + S-adenosyl-L-homocysteine + H(+). Its function is as follows. Catalyzes carboxymethyl transfer from carboxy-S-adenosyl-L-methionine (Cx-SAM) to 5-hydroxyuridine (ho5U) to form 5-carboxymethoxyuridine (cmo5U) at position 34 in tRNAs. The protein is tRNA U34 carboxymethyltransferase of Salmonella gallinarum (strain 287/91 / NCTC 13346).